A 350-amino-acid polypeptide reads, in one-letter code: Hydroxymethylglutaryl-CoA synthase (350 aa).

Aspartate 30 contacts (3S)-3-hydroxy-3-methylglutaryl-CoA. Residue glutamate 82 is the Proton donor/acceptor of the active site. The (3S)-3-hydroxy-3-methylglutaryl-CoA site is built by cysteine 114, serine 155, threonine 203, and histidine 236. Cysteine 114 (acyl-thioester intermediate) is an active-site residue. Histidine 236 acts as the Proton donor/acceptor in catalysis. Arginine 241 contacts CoA. Arginine 245, asparagine 268, and serine 298 together coordinate (3S)-3-hydroxy-3-methylglutaryl-CoA.

Belongs to the thiolase-like superfamily. Archaeal HMG-CoA synthase family. Interacts with acetoacetyl-CoA thiolase that catalyzes the precedent step in the pathway and with a DUF35 protein. The acetoacetyl-CoA thiolase/HMG-CoA synthase complex channels the intermediate via a fused CoA-binding site, which allows for efficient coupling of the endergonic thiolase reaction with the exergonic HMGCS reaction.

It carries out the reaction acetoacetyl-CoA + acetyl-CoA + H2O = (3S)-3-hydroxy-3-methylglutaryl-CoA + CoA + H(+). The protein operates within metabolic intermediate biosynthesis; (R)-mevalonate biosynthesis; (R)-mevalonate from acetyl-CoA: step 2/3. Its function is as follows. Catalyzes the condensation of acetyl-CoA with acetoacetyl-CoA to form 3-hydroxy-3-methylglutaryl-CoA (HMG-CoA). Functions in the mevalonate (MVA) pathway leading to isopentenyl diphosphate (IPP), a key precursor for the biosynthesis of isoprenoid compounds that are building blocks of archaeal membrane lipids. This is Hydroxymethylglutaryl-CoA synthase from Pyrobaculum aerophilum (strain ATCC 51768 / DSM 7523 / JCM 9630 / CIP 104966 / NBRC 100827 / IM2).